The primary structure comprises 432 residues: MQHTQSEKLHEEALQHIVGGVNSPSRSYKAVGGGSPVAMERGSGAYFWDVDGNKYIDYLAAYGPIITGHAHPHITKAIQTAAENGVLYGTPTKHEVTFAKMLKEAIPALDKVRFVNSGTEAVMTTIRVARAYTGRTKIIKFAGCYHGHSDLVLVAAGSGPSTLGTPDSAGVPKSIANEVITVPFNDIDSYKEALDKWGNDIAAVLVEPIVGNFGIVEPKSGFLEQVNELTHNAGALVIYDEVITAFRFMYGGAQDLLGVKPDLTALGKIIGGGLPIGAYGGRKEIMEQVAPLGPAYQAGTMAGNPASILSGIACLEVLKEKGTYEKLDRLGAMLEEGILAHAETHGIDITVNRLKGALTVYFTNEKVENYEQAENTDGDMFAAFFKLMLERGINLAPSKYEAWFITTAHTEEDIKDTLKAVDDSFKQLKQRM.

Lys268 carries the post-translational modification N6-(pyridoxal phosphate)lysine.

Belongs to the class-III pyridoxal-phosphate-dependent aminotransferase family. HemL subfamily. Homodimer. The cofactor is pyridoxal 5'-phosphate.

The protein resides in the cytoplasm. The catalysed reaction is (S)-4-amino-5-oxopentanoate = 5-aminolevulinate. It functions in the pathway porphyrin-containing compound metabolism; protoporphyrin-IX biosynthesis; 5-aminolevulinate from L-glutamyl-tRNA(Glu): step 2/2. In Bacillus licheniformis (strain ATCC 14580 / DSM 13 / JCM 2505 / CCUG 7422 / NBRC 12200 / NCIMB 9375 / NCTC 10341 / NRRL NRS-1264 / Gibson 46), this protein is Glutamate-1-semialdehyde 2,1-aminomutase 1.